Reading from the N-terminus, the 109-residue chain is Mitochondrial pyruvate carrier 1 (109 aa).

An N-acetylalanine modification is found at Ala2. The Mitochondrial matrix portion of the chain corresponds to 2 to 20; it reads AGALVRKAADYVRSKDFRD. A helical transmembrane segment spans residues 21 to 41; the sequence is YLMSTHFWGPVANWGLPIAAI. At 42 to 52 the chain is on the mitochondrial intermembrane side; sequence NDMKKSPEIIS. A helical transmembrane segment spans residues 53 to 71; the sequence is GRMTFALCCYSLTFMRFAY. Position 72 is an N6-acetyllysine (Lys72). The Mitochondrial matrix segment spans residues 72–109; the sequence is KVQPRNWLLFACHVTNEVAQLIQGGRLINYEMSKRPSA.

Belongs to the mitochondrial pyruvate carrier (MPC) (TC 2.A.105) family. In terms of assembly, homodimer. Forms heterodimer with MPC2. The heterodimer is the more stable and dominant form.

Its subcellular location is the mitochondrion inner membrane. The enzyme catalyses pyruvate(out) + H(+)(out) = pyruvate(in) + H(+)(in). Functionally, mediates the uptake of pyruvate into mitochondria. This Mus musculus (Mouse) protein is Mitochondrial pyruvate carrier 1 (Mpc1).